Consider the following 364-residue polypeptide: DNA replication and repair protein RecF (364 aa).

30–37 is a binding site for ATP; sequence GNNAQGKT.

Belongs to the RecF family.

It is found in the cytoplasm. Its function is as follows. The RecF protein is involved in DNA metabolism; it is required for DNA replication and normal SOS inducibility. RecF binds preferentially to single-stranded, linear DNA. It also seems to bind ATP. The protein is DNA replication and repair protein RecF of Clostridium botulinum (strain 657 / Type Ba4).